A 393-amino-acid polypeptide reads, in one-letter code: Acetate kinase (393 aa).

Asn10 is a Mg(2+) binding site. Lys17 serves as a coordination point for ATP. Residue Arg89 participates in substrate binding. The active-site Proton donor/acceptor is Asp146. ATP is bound by residues His204–Gly208, Asp278–Arg280, and Gly323–Asn327. Glu376 serves as a coordination point for Mg(2+).

It belongs to the acetokinase family. Homodimer. It depends on Mg(2+) as a cofactor. Mn(2+) serves as cofactor.

The protein resides in the cytoplasm. The catalysed reaction is acetate + ATP = acetyl phosphate + ADP. It participates in metabolic intermediate biosynthesis; acetyl-CoA biosynthesis; acetyl-CoA from acetate: step 1/2. Its function is as follows. Catalyzes the formation of acetyl phosphate from acetate and ATP. Can also catalyze the reverse reaction. This Mycoplasma genitalium (strain ATCC 33530 / DSM 19775 / NCTC 10195 / G37) (Mycoplasmoides genitalium) protein is Acetate kinase.